We begin with the raw amino-acid sequence, 275 residues long: Large ribosomal subunit protein uL2 (275 aa).

Disordered stretches follow at residues 28–48 and 223–275; these read KPYA…NNGR and VVMN…RNKK.

It belongs to the universal ribosomal protein uL2 family. Part of the 50S ribosomal subunit. Forms a bridge to the 30S subunit in the 70S ribosome.

Its function is as follows. One of the primary rRNA binding proteins. Required for association of the 30S and 50S subunits to form the 70S ribosome, for tRNA binding and peptide bond formation. It has been suggested to have peptidyltransferase activity; this is somewhat controversial. Makes several contacts with the 16S rRNA in the 70S ribosome. This chain is Large ribosomal subunit protein uL2, found in Photobacterium profundum (strain SS9).